Consider the following 245-residue polypeptide: Ribonuclease 3 (245 aa).

Residues 19–148 (FKLFQEKIGI…FIGALYLDQG (130 aa)) enclose the RNase III domain. Residue Glu61 coordinates Mg(2+). Asp65 is a catalytic residue. Asp134 and Glu137 together coordinate Mg(2+). Residue Glu137 is part of the active site. The region spanning 174–243 (DYKSQLQELI…AAEALKKLKE (70 aa)) is the DRBM domain.

The protein belongs to the ribonuclease III family. In terms of assembly, homodimer. The cofactor is Mg(2+).

The protein resides in the cytoplasm. It catalyses the reaction Endonucleolytic cleavage to 5'-phosphomonoester.. Functionally, digests double-stranded RNA. Involved in the processing of primary rRNA transcript to yield the immediate precursors to the large and small rRNAs (23S and 16S). Processes some mRNAs, and tRNAs when they are encoded in the rRNA operon. Processes pre-crRNA and tracrRNA of type II CRISPR loci if present in the organism. This is Ribonuclease 3 from Bacillus cereus (strain 03BB102).